The following is a 497-amino-acid chain: Cytochrome P450 71A14 (497 aa).

A helical membrane pass occupies residues 3 to 23 (MIIISLCLATILALLLLKQFL). Heme is bound at residue cysteine 440.

It belongs to the cytochrome P450 family. Requires heme as cofactor.

The protein resides in the membrane. The polypeptide is Cytochrome P450 71A14 (CYP71A14) (Arabidopsis thaliana (Mouse-ear cress)).